Reading from the N-terminus, the 272-residue chain is Phosphate import ATP-binding protein PstB (272 aa).

An ABC transporter domain is found at 18–257 (VSIQNATISY…FNDTDKIFNA (240 aa)). An ATP-binding site is contributed by 50–57 (GPSGCGKS).

The protein belongs to the ABC transporter superfamily. Phosphate importer (TC 3.A.1.7) family. As to quaternary structure, the complex is composed of two ATP-binding proteins (PstB), two transmembrane proteins (PstC and PstA) and a solute-binding protein (PstS).

The protein resides in the cell inner membrane. The enzyme catalyses phosphate(out) + ATP + H2O = ADP + 2 phosphate(in) + H(+). In terms of biological role, part of the ABC transporter complex PstSACB involved in phosphate import. Responsible for energy coupling to the transport system. In Synechococcus sp. (strain CC9311), this protein is Phosphate import ATP-binding protein PstB.